We begin with the raw amino-acid sequence, 136 residues long: Small ribosomal subunit protein uS9 (136 aa).

This sequence belongs to the universal ribosomal protein uS9 family.

In Borreliella afzelii (strain PKo) (Borrelia afzelii), this protein is Small ribosomal subunit protein uS9.